Here is a 212-residue protein sequence, read N- to C-terminus: Large ribosomal subunit protein bL25 (212 aa).

The span at 1-16 shows a compositional bias: basic and acidic residues; it reads MKTRIDLTVEPRETGK. The segment at 1–22 is disordered; it reads MKTRIDLTVEPRETGKHNSRGL.

It belongs to the bacterial ribosomal protein bL25 family. CTC subfamily. As to quaternary structure, part of the 50S ribosomal subunit; part of the 5S rRNA/L5/L18/L25 subcomplex. Contacts the 5S rRNA. Binds to the 5S rRNA independently of L5 and L18.

Functionally, this is one of the proteins that binds to the 5S RNA in the ribosome where it forms part of the central protuberance. The sequence is that of Large ribosomal subunit protein bL25 from Bdellovibrio bacteriovorus (strain ATCC 15356 / DSM 50701 / NCIMB 9529 / HD100).